Reading from the N-terminus, the 252-residue chain is Probable endonuclease 4 (252 aa).

Zn(2+)-binding residues include histidine 56, histidine 96, glutamate 129, aspartate 162, histidine 165, histidine 191, aspartate 204, histidine 206, and glutamate 233.

The protein belongs to the AP endonuclease 2 family. Zn(2+) is required as a cofactor.

The catalysed reaction is Endonucleolytic cleavage to 5'-phosphooligonucleotide end-products.. Its function is as follows. Endonuclease IV plays a role in DNA repair. It cleaves phosphodiester bonds at apurinic or apyrimidinic (AP) sites, generating a 3'-hydroxyl group and a 5'-terminal sugar phosphate. The protein is Probable endonuclease 4 of Mycobacterium tuberculosis (strain ATCC 25177 / H37Ra).